The following is a 1241-amino-acid chain: DNA-directed RNA polymerase subunit beta (1241 aa).

A disordered region spans residues 1186–1210 (EDEIVPTAEKRSSNQDEEALELVDN). The span at 1200 to 1210 (QDEEALELVDN) shows a compositional bias: acidic residues.

It belongs to the RNA polymerase beta chain family. In terms of assembly, the RNAP catalytic core consists of 2 alpha, 1 beta, 1 beta' and 1 omega subunit. When a sigma factor is associated with the core the holoenzyme is formed, which can initiate transcription.

The enzyme catalyses RNA(n) + a ribonucleoside 5'-triphosphate = RNA(n+1) + diphosphate. DNA-dependent RNA polymerase catalyzes the transcription of DNA into RNA using the four ribonucleoside triphosphates as substrates. This chain is DNA-directed RNA polymerase subunit beta, found in Clostridium novyi (strain NT).